Reading from the N-terminus, the 147-residue chain is uncharacterized protein (147 aa).

Residues Leu-44–Ile-147 enclose the HTH LytTR-type domain.

The protein resides in the cytoplasm. This is an uncharacterized protein from Staphylococcus aureus (strain MW2).